The primary structure comprises 148 residues: ATP synthase epsilon chain (148 aa).

This sequence belongs to the ATPase epsilon chain family. F-type ATPases have 2 components, CF(1) - the catalytic core - and CF(0) - the membrane proton channel. CF(1) has five subunits: alpha(3), beta(3), gamma(1), delta(1), epsilon(1). CF(0) has three main subunits: a, b and c.

It is found in the cell membrane. Functionally, produces ATP from ADP in the presence of a proton gradient across the membrane. This is ATP synthase epsilon chain from Streptococcus thermophilus (strain ATCC BAA-250 / LMG 18311).